Reading from the N-terminus, the 435-residue chain is UPF0761 membrane protein mma_2179 (435 aa).

The next 6 membrane-spanning stretches (helical) occupy residues 45-65, 103-123, 142-162, 177-197, 208-228, and 252-272; these read VLAL…FPLF, LSAF…LMID, ILVY…SMTF, VPFV…MVAF, LVEW…FEIV, and FPIF…GAVV.

The protein belongs to the UPF0761 family.

Its subcellular location is the cell inner membrane. The polypeptide is UPF0761 membrane protein mma_2179 (Janthinobacterium sp. (strain Marseille) (Minibacterium massiliensis)).